The sequence spans 256 residues: Small ribosomal subunit protein eS1 (256 aa).

The span at 1–18 (MAVGKNKRLSKGKKGVKK) shows a compositional bias: basic residues. The tract at residues 1-20 (MAVGKNKRLSKGKKGVKKRT) is disordered. The residue at position 2 (A2) is an N-acetylalanine; partial.

It belongs to the eukaryotic ribosomal protein eS1 family. In terms of assembly, component of the small ribosomal subunit. Mature ribosomes consist of a small (40S) and a large (60S) subunit. The 40S subunit contains about 33 different proteins and 1 molecule of RNA (18S). The 60S subunit contains about 49 different proteins and 3 molecules of RNA (25S, 5.8S and 5S).

It is found in the cytoplasm. The sequence is that of Small ribosomal subunit protein eS1 (rps1) from Aspergillus clavatus (strain ATCC 1007 / CBS 513.65 / DSM 816 / NCTC 3887 / NRRL 1 / QM 1276 / 107).